The chain runs to 266 residues: Translation initiation factor 2 subunit alpha (266 aa).

Residues 10–81 (GELVVGKIDE…SAQQIDLSIK (72 aa)) enclose the S1 motif domain. The disordered stretch occupies residues 233 to 266 (AEDALEESADRAAKVVEQHGGSGQFHRERSEDDE). 2 stretches are compositionally biased toward basic and acidic residues: residues 240–249 (SADRAAKVVE) and 257–266 (FHRERSEDDE).

The protein belongs to the eIF-2-alpha family. As to quaternary structure, heterotrimer composed of an alpha, a beta and a gamma chain.

Its function is as follows. eIF-2 functions in the early steps of protein synthesis by forming a ternary complex with GTP and initiator tRNA. This Haloarcula marismortui (strain ATCC 43049 / DSM 3752 / JCM 8966 / VKM B-1809) (Halobacterium marismortui) protein is Translation initiation factor 2 subunit alpha.